Here is a 267-residue protein sequence, read N- to C-terminus: 27 kDa primary mesenchyme-specific spicule protein (267 aa).

The signal sequence occupies residues Met1–Gly16. The tract at residues Glu20–Gln64 is 11 X 4 AA tandem repeats of G-[PQ]-G-[MQ]. A run of 11 repeats spans residues Gly21–Met24, Gly25–Met28, Gly29–Met32, Gly33–Met36, Gly37–Met40, Gly41–Met44, Gly45–Met48, Gly49–Met52, Gly53–Gln56, Gly57–Gln60, and Gly61–Gln64. A disordered region spans residues Met44–Gly68. Residues Ile79–Ser220 form the C-type lectin domain. 2 cysteine pairs are disulfide-bonded: Cys100-Cys219 and Cys197-Cys211.

As to expression, expressed specifically in the micromere/primary mesenchyme cells (PMC) lineage. Produced uniformly and exclusively by PMCs through the early prism stage and this specificity is further restricted during skeletogenesis to a subpopulation of PMCs associated with the growing tips of the spicules.

It localises to the secreted. May play a role in the regulation or execution of skeletal growth. The chain is 27 kDa primary mesenchyme-specific spicule protein (PM27) from Strongylocentrotus purpuratus (Purple sea urchin).